Reading from the N-terminus, the 749-residue chain is MSDSEDVALSELSSRNGIKKEDEEMPLAQLNGNGNAKLRKRKHSEKSKDDHKDKKRKKEKKLSKEKVNNKVKDELISAPVTPKKTPKISKTPVSATSSPAPKKEDSVETDEGYKWWEDENFGEGDERWQTLEHNGVLFPPPYEPLPSYVKLYYEGKPVDLPPLAEEVAGYFAAMIETDHAKNPVFQQNFFNDFLQVLKEGGGCNVDIKEFSKCDFSKMAAFFEKQREEKKSMSKAEKQRIKEEKEKLEEPFKTCLMDGRRENVGNFRVEPPGLFRGRGAHPKTGKFKRRVFPEDITLNLGEGAPIPPPPEGHQWGGIRHDKTVVWLAMWRENISDTFKYVKLAANSSIKGISDMKKFETARKLKDHIERIRADYQKMLKDQFMQNRQIATATYLIDIFALRAGGEKGEDEADTVGCCSLRYEHVTLKPPNKVIFDFLGKDSIRFYQEVEVDRQVFKNLRIFKKEPKGPGDDLFDRITPTILNKHLQNYMKGLTAKVFRTYNASKTMQDQMDLISNEGTVAEKVVKYNAANRTVAILCNHQRTVSKNHEQAVKRINDKIRELEWQKIRLKKMILDIDETEKKDNPKYFEELDDLTNDEMNVIVERVIERQKDQAEKKWNRDNEKRKMEKEELLTKADLQEKLDKIEETRKDYLEEIKTGVVRATKGSSVSSLKSKVETVENRIVNTSYQLKDKEDNSEVSLGTSKMNYIDPRLTVVFAKKFNVPIEKLFTKTLRDKFNWAIESTDENWRF.

The interval 1-110 (MSDSEDVALS…PKKEDSVETD (110 aa)) is disordered. Over residues 62–75 (LSKEKVNNKVKDEL) the composition is skewed to basic and acidic residues. The segment covering 79-94 (PVTPKKTPKISKTPVS) has biased composition (low complexity). The segment covering 101-110 (PKKEDSVETD) has biased composition (basic and acidic residues). Interaction with DNA regions lie at residues 338–339 (KY), 401–406 (RAGGEK), and 493–495 (TAK). Residues 345-749 (NSSIKGISDM…IESTDENWRF (405 aa)) enclose the Topo IB-type catalytic domain. Y707 acts as the O-(3'-phospho-DNA)-tyrosine intermediate in catalysis.

The protein belongs to the type IB topoisomerase family.

Its subcellular location is the nucleus. It localises to the nucleolus. The protein localises to the nucleoplasm. It carries out the reaction ATP-independent breakage of single-stranded DNA, followed by passage and rejoining.. Functionally, releases the supercoiling and torsional tension of DNA introduced during the DNA replication and transcription by transiently cleaving and rejoining one strand of the DNA duplex. Introduces a single-strand break via transesterification at the specific target site 5'-[CT]CCTTp site in duplex DNA. The scissile phosphodiester is attacked by the catalytic tyrosine of the enzyme, resulting in the formation of a DNA-(3'-phosphotyrosyl)-enzyme intermediate and the expulsion of a 5'-OH DNA strand. The free DNA strand then undergoes passage around the unbroken strand thus removing DNA supercoils. Finally, in the religation step, the DNA 5'-OH attacks the covalent intermediate to expel the active-site tyrosine and restore the DNA phosphodiester backbone. This is DNA topoisomerase 1 (TOP1) from Candidozyma auris (Yeast).